Consider the following 262-residue polypeptide: Ubiquitin thioesterase otubain-like (262 aa).

An OTU domain is found at 64 to 262 (KFIRRTRPDG…PGHYDILYPN (199 aa)). Asp-72 is a catalytic residue. Cys-75 functions as the Nucleophile in the catalytic mechanism. Ile-168 serves as a coordination point for substrate. Residue His-255 is part of the active site.

It belongs to the peptidase C65 family.

The enzyme catalyses Thiol-dependent hydrolysis of ester, thioester, amide, peptide and isopeptide bonds formed by the C-terminal Gly of ubiquitin (a 76-residue protein attached to proteins as an intracellular targeting signal).. Possible hydrolase that can remove conjugated ubiquitin from proteins in vitro and may therefore play an important regulatory role at the level of protein turnover by preventing degradation. This chain is Ubiquitin thioesterase otubain-like, found in Drosophila melanogaster (Fruit fly).